Here is a 67-residue protein sequence, read N- to C-terminus: Small ribosomal subunit protein eS27 (67 aa).

Zn(2+) is bound by residues cysteine 22, cysteine 25, cysteine 41, and cysteine 44. The C4-type zinc-finger motif lies at 22–44 (CPDCGNEQVTFSHAAMVVRCLVC).

Belongs to the eukaryotic ribosomal protein eS27 family. As to quaternary structure, part of the 30S ribosomal subunit. Requires Zn(2+) as cofactor.

The sequence is that of Small ribosomal subunit protein eS27 from Pyrobaculum neutrophilum (strain DSM 2338 / JCM 9278 / NBRC 100436 / V24Sta) (Thermoproteus neutrophilus).